A 429-amino-acid chain; its full sequence is 3-isopropylmalate dehydratase large subunit (429 aa).

The [4Fe-4S] cluster site is built by cysteine 303, cysteine 363, and cysteine 366.

The protein belongs to the aconitase/IPM isomerase family. LeuC type 2 subfamily. As to quaternary structure, heterodimer of LeuC and LeuD. It depends on [4Fe-4S] cluster as a cofactor.

The enzyme catalyses (2R,3S)-3-isopropylmalate = (2S)-2-isopropylmalate. Its pathway is amino-acid biosynthesis; L-leucine biosynthesis; L-leucine from 3-methyl-2-oxobutanoate: step 2/4. Catalyzes the isomerization between 2-isopropylmalate and 3-isopropylmalate, via the formation of 2-isopropylmaleate. This is 3-isopropylmalate dehydratase large subunit from Caldicellulosiruptor bescii (strain ATCC BAA-1888 / DSM 6725 / KCTC 15123 / Z-1320) (Anaerocellum thermophilum).